Here is a 382-residue protein sequence, read N- to C-terminus: D-alanine--D-alanine ligase (382 aa).

The region spanning 161-372 (KVVFESAGLH…YAELIDELIH (212 aa)) is the ATP-grasp domain. 193-248 (VDRLGFPVFVKPARAGSSMGISKVDSLEGLDAAIEEARRHDLKLVIEAGIVGREIE) contributes to the ATP binding site. Residues Asp326, Glu339, and Asn341 each coordinate Mg(2+).

This sequence belongs to the D-alanine--D-alanine ligase family. Mg(2+) is required as a cofactor. It depends on Mn(2+) as a cofactor.

It localises to the cytoplasm. It carries out the reaction 2 D-alanine + ATP = D-alanyl-D-alanine + ADP + phosphate + H(+). It functions in the pathway cell wall biogenesis; peptidoglycan biosynthesis. Functionally, cell wall formation. This is D-alanine--D-alanine ligase from Pseudarthrobacter chlorophenolicus (strain ATCC 700700 / DSM 12829 / CIP 107037 / JCM 12360 / KCTC 9906 / NCIMB 13794 / A6) (Arthrobacter chlorophenolicus).